The chain runs to 107 residues: Nucleoid-associated protein A1E_05550 (107 aa).

The protein belongs to the YbaB/EbfC family. Homodimer.

It localises to the cytoplasm. It is found in the nucleoid. Binds to DNA and alters its conformation. May be involved in regulation of gene expression, nucleoid organization and DNA protection. The polypeptide is Nucleoid-associated protein A1E_05550 (Rickettsia canadensis (strain McKiel)).